Reading from the N-terminus, the 258-residue chain is MLAKRIIPCLDVKDGQVVKGVQFRNHEIIGDIVPLAQRYAQEGADELVFYDITASSDGRVVDKSWVARVAEVIDIPFCVAGGIKSVEDASQILTFGADKISINSPALADPTLITRLADRYGVQCIVVGIDTWYDTESDSYQVYQFTGDEKRTKATTWQTEDWVKEIQLRGAGEIVLNMMNQDGVRNGYDLRQLQQMRAICHVPLIASGGAGTPDHFLEAFRDADVDGALAASVFHKQIINIGELKKYLSEQGVEIRVC.

Active-site residues include Asp11 and Asp130.

It belongs to the HisA/HisF family. As to quaternary structure, heterodimer of HisH and HisF.

It localises to the cytoplasm. The catalysed reaction is 5-[(5-phospho-1-deoxy-D-ribulos-1-ylimino)methylamino]-1-(5-phospho-beta-D-ribosyl)imidazole-4-carboxamide + L-glutamine = D-erythro-1-(imidazol-4-yl)glycerol 3-phosphate + 5-amino-1-(5-phospho-beta-D-ribosyl)imidazole-4-carboxamide + L-glutamate + H(+). The protein operates within amino-acid biosynthesis; L-histidine biosynthesis; L-histidine from 5-phospho-alpha-D-ribose 1-diphosphate: step 5/9. IGPS catalyzes the conversion of PRFAR and glutamine to IGP, AICAR and glutamate. The HisF subunit catalyzes the cyclization activity that produces IGP and AICAR from PRFAR using the ammonia provided by the HisH subunit. This is Imidazole glycerol phosphate synthase subunit HisF from Yersinia pseudotuberculosis serotype O:3 (strain YPIII).